We begin with the raw amino-acid sequence, 188 residues long: Probable nicotinate-nucleotide adenylyltransferase (188 aa).

This sequence belongs to the NadD family.

It catalyses the reaction nicotinate beta-D-ribonucleotide + ATP + H(+) = deamido-NAD(+) + diphosphate. Its pathway is cofactor biosynthesis; NAD(+) biosynthesis; deamido-NAD(+) from nicotinate D-ribonucleotide: step 1/1. Catalyzes the reversible adenylation of nicotinate mononucleotide (NaMN) to nicotinic acid adenine dinucleotide (NaAD). This is Probable nicotinate-nucleotide adenylyltransferase from Sulfurovum sp. (strain NBC37-1).